We begin with the raw amino-acid sequence, 392 residues long: MASHKLLVTPPKALLKPLSIPNQLLLGPGPSNLPPRIMAAGGLQMIGSMSKDMYQIMDEIKEGIQYVFQTRNPLTLVISGSGHCALEAALVNVLEPGDSFLVGANGIWGQRAVDIGERIGARVHPMTKDPGGHYTLQEVEEGLAQHKPVLLFLTHGESSTGVLQPLDGFGELCHRYKCLLLVDSVASLGGTPLYMDRQGIDILYSGSQKALNAPPGTSLISFSDKAKKKMYSRKTKPFSFYLDIKWLANFWGCDDQPRMYHHTIPVISLYSLRESLALIAEQGLENSWRQHREAAAYLHGRLQALGLQLFVKDPALRLPTVTTVAVPAGYDWRDIVSYVIDHFDIEIMGGLGPSTGKVLRIGLLGCNATRENVDRVTEALRAALQHCPKKKL.

T9 is modified (phosphothreonine). K209 carries the post-translational modification N6-(pyridoxal phosphate)lysine. An N6-acetyllysine; alternate modification is found at K225. An N6-succinyllysine; alternate modification is found at K225. N6-acetyllysine occurs at positions 234 and 312. A substrate-binding site is contributed by R360.

This sequence belongs to the class-V pyridoxal-phosphate-dependent aminotransferase family. Homodimer. Pyridoxal 5'-phosphate serves as cofactor. As to expression, liver.

The protein localises to the peroxisome. It catalyses the reaction L-serine + pyruvate = 3-hydroxypyruvate + L-alanine. It carries out the reaction glyoxylate + L-alanine = glycine + pyruvate. With respect to regulation, alanine--glyoxylate aminotransferase activity is inhibited by 1 mM (aminooxy)acetic acid by 97.5%. Functionally, peroxisomal aminotransferase that catalyzes the transamination of glyoxylate to glycine and contributes to the glyoxylate detoxification. Also catalyzes the transamination between L-serine and pyruvate and contributes to gluconeogenesis from the L-serine metabolism. This chain is Alanine--glyoxylate aminotransferase, found in Homo sapiens (Human).